Reading from the N-terminus, the 226-residue chain is Putative ABC transporter ATP-binding protein BH02760 (226 aa).

The region spanning 4–222 is the ABC transporter domain; it reads IKFDKVTQVF…IPLVAIKEYI (219 aa). 35 to 42 contributes to the ATP binding site; that stretch reads GANGSGKS.

Belongs to the ABC transporter superfamily.

It is found in the cell inner membrane. Functionally, probably part of an ABC transporter complex. Responsible for energy coupling to the transport system. The protein is Putative ABC transporter ATP-binding protein BH02760 of Bartonella henselae (strain ATCC 49882 / DSM 28221 / CCUG 30454 / Houston 1) (Rochalimaea henselae).